The following is a 360-amino-acid chain: MKPSMRSRLEQLAHRLIEVDALLAEPETAADMDRFRKLSRERAELEPVVEAFNAFLGVEADVATAQEMLSDPDMKAMAEDEIKTGRARIEEMEAALQLLLLPRDPDDGRSLFLEIRAGTGGDESALFSGDLLRMYTRYAETRGWRVEIMSESESELGGYKEVIARIDGDGAYGRLKFESGAHRVQRVPATEAQGRIHTSACTVAVMPEADAMSDIVINPSDLRIDTFRASGAGGQHINKTDSAVRITHVPTGLVVECQDDRSQHRNKDKAMQVLAARLKDKEMRERQSKEAAERKSLIGSGDRSERIRTYNYPQGRVTDHRINLTLYKLQQIMEGDLDELTGALLAEHQAEQLAALGHDL.

Q235 carries the post-translational modification N5-methylglutamine.

The protein belongs to the prokaryotic/mitochondrial release factor family. Methylated by PrmC. Methylation increases the termination efficiency of RF1.

The protein localises to the cytoplasm. Its function is as follows. Peptide chain release factor 1 directs the termination of translation in response to the peptide chain termination codons UAG and UAA. This Bordetella pertussis (strain Tohama I / ATCC BAA-589 / NCTC 13251) protein is Peptide chain release factor 1.